Here is a 278-residue protein sequence, read N- to C-terminus: D-arabinitol 2-dehydrogenase [ribulose-forming] (278 aa).

NADP(+) contacts are provided by leucine 28 and asparagine 49. Serine 166 acts as the Proton donor in catalysis. NADP(+) contacts are provided by tyrosine 181, lysine 185, isoleucine 214, and threonine 216. The active-site Proton acceptor is tyrosine 181. Lysine 185 serves as the catalytic Lowers pKa of active site Tyr.

It belongs to the short-chain dehydrogenases/reductases (SDR) family.

The catalysed reaction is D-arabinitol + NAD(+) = D-ribulose + NADH + H(+). It participates in carbohydrate metabolism; D-arabinitol metabolism. This chain is D-arabinitol 2-dehydrogenase [ribulose-forming] (ARDH), found in Scheffersomyces stipitis (strain ATCC 58785 / CBS 6054 / NBRC 10063 / NRRL Y-11545) (Yeast).